Here is a 514-residue protein sequence, read N- to C-terminus: Glucose-1-phosphate adenylyltransferase small subunit 2, chloroplastic/amyloplastic/cytosolic (514 aa).

A chloroplast-targeting transit peptide spans 1–64 (MAMAAAMGVA…RRRPLVFSPR (64 aa)). Residues 35–74 (RPRRPRGVASSSSSSSSAGRRRRPLVFSPRAVSDSKSSQT) are disordered. Residues 41–52 (GVASSSSSSSSA) are compositionally biased toward low complexity.

The protein belongs to the bacterial/plant glucose-1-phosphate adenylyltransferase family. In terms of assembly, heterotetramer composed of two small and two large subunits. In terms of tissue distribution, expressed in leaves.

It is found in the plastid. It localises to the chloroplast. Its subcellular location is the amyloplast. The protein resides in the cytoplasm. The protein localises to the cytosol. It carries out the reaction alpha-D-glucose 1-phosphate + ATP + H(+) = ADP-alpha-D-glucose + diphosphate. It functions in the pathway glycan biosynthesis; starch biosynthesis. Activated by 3'phosphoglycerate, inhibited by orthophosphate. Allosteric regulation. Inhibited by inorganic phosphate (Pi). Its function is as follows. Involved in synthesis of starch. Catalyzes the synthesis of ADP-glucose, a molecule that serves as an activated glycosyl donor for alpha-1,4-glucan synthesis. The chloroplastic isoform 1 is essential for starch synthesis in leaf chloroplasts and the cytosolic isoform 2 for synthesis in seed endosperm. This chain is Glucose-1-phosphate adenylyltransferase small subunit 2, chloroplastic/amyloplastic/cytosolic, found in Oryza sativa subsp. japonica (Rice).